We begin with the raw amino-acid sequence, 1187 residues long: Probable histidine kinase 5 (1187 aa).

The Extracellular portion of the chain corresponds to Met1–Gly175. Residues Met176–Phe196 traverse the membrane as a helical segment. Over Lys197–Arg226 the chain is Cytoplasmic. A helical membrane pass occupies residues Ala227–His247. Over Ala248 to Ser531 the chain is Extracellular. The CHASE domain maps to Asn295 to His519. A helical transmembrane segment spans residues Ala532 to Ala552. Residues Thr553–Thr1187 lie on the Cytoplasmic side of the membrane. The Histidine kinase domain occupies Thr587–Glu862. His590 carries the phosphohistidine; by autocatalysis modification. 2 Response regulatory domains span residues Arg886–Leu1017 and Asn1041–Leu1178. A 4-aspartylphosphate mark is found at Asp942 and Asp1091.

In terms of processing, activation probably requires a transfer of a phosphate group between a His in the transmitter domain and an Asp of the receiver domain. In terms of tissue distribution, highly expressed in young leaves and at lower levels in roots, mature leaves, stems and spikelets.

Its subcellular location is the cell membrane. It catalyses the reaction ATP + protein L-histidine = ADP + protein N-phospho-L-histidine.. Its function is as follows. Cytokinin receptor related to bacterial two-component regulators. Functions as a histidine kinase and transmits the stress signal to a downstream MAPK cascade. The protein is Probable histidine kinase 5 of Oryza sativa subsp. japonica (Rice).